Here is a 62-residue protein sequence, read N- to C-terminus: Photosystem II reaction center protein Z (62 aa).

2 helical membrane passes run L8–V28 and Y41–V61.

The protein belongs to the PsbZ family. As to quaternary structure, PSII is composed of 1 copy each of membrane proteins PsbA, PsbB, PsbC, PsbD, PsbE, PsbF, PsbH, PsbI, PsbJ, PsbK, PsbL, PsbM, PsbT, PsbX, PsbY, PsbZ, Psb30/Ycf12, at least 3 peripheral proteins of the oxygen-evolving complex and a large number of cofactors. It forms dimeric complexes.

It localises to the plastid. Its subcellular location is the chloroplast thylakoid membrane. Its function is as follows. May control the interaction of photosystem II (PSII) cores with the light-harvesting antenna, regulates electron flow through the 2 photosystem reaction centers. PSII is a light-driven water plastoquinone oxidoreductase, using light energy to abstract electrons from H(2)O, generating a proton gradient subsequently used for ATP formation. This Guillardia theta (Cryptophyte) protein is Photosystem II reaction center protein Z.